We begin with the raw amino-acid sequence, 210 residues long: Cell division protein FtsQ (210 aa).

Residues 1-58 form the POTRA domain; the sequence is LQTSEIEVFQLLGLDGSTSLIALDIDAARRKLVQLPWVEDVDIRKVYPKTVEVRLKER. A helical transmembrane segment spans residues 8 to 25; sequence VFQLLGLDGSTSLIALDI.

This sequence belongs to the FtsQ/DivIB family. FtsQ subfamily.

It localises to the cell inner membrane. Essential cell division protein. In Rhizobium radiobacter (Agrobacterium tumefaciens), this protein is Cell division protein FtsQ.